Reading from the N-terminus, the 620-residue chain is Glutathione-regulated potassium-efflux system protein KefC (620 aa).

12 helical membrane passes run 4 to 24 (HTLI…PVAV), 26 to 46 (LGLG…PWGL), 54 to 74 (AILH…GLEL), 86 to 106 (VFGG…GFCV), 114 to 134 (VALL…MQAM), 149 to 169 (FAVL…IPLL), 178 to 198 (ASAF…VVLL), 218 to 238 (VFSA…EEAG), 271 to 291 (LLLG…TLVA), 296 to 316 (VLTL…LVAK), 326 to 346 (RWFA…FGAA), and 359 to 379 (ALTL…VLLT). Positions 399–518 (QPRVIIAGFG…AGVAQPERET (120 aa)) constitute an RCK N-terminal domain. The segment at 596–620 (HGWQGTREGKHTGNDADEPEVKPQP) is disordered.

This sequence belongs to the monovalent cation:proton antiporter 2 (CPA2) transporter (TC 2.A.37) family. KefC subfamily. As to quaternary structure, homodimer. Interacts with the regulatory subunit KefF.

Its subcellular location is the cell inner membrane. Pore-forming subunit of a potassium efflux system that confers protection against electrophiles. Catalyzes K(+)/H(+) antiport. This is Glutathione-regulated potassium-efflux system protein KefC from Cronobacter sakazakii (strain ATCC BAA-894) (Enterobacter sakazakii).